The sequence spans 329 residues: MASQLTDAFARKFYYLRLSITDVCNFRCTYCLPDGYKPGGVTNNGFLTVDEIRRVTRAFASLGTEKVRLTGGEPSLRRDFTDIIAAVGENDAIRQIAVTTNGYRLARDAASWREAGLTGVNVSVDSLDARQFHAITGQDKFRQVMAGIDAAFDAGFEKVKVNTVLMRDVNHHQLDTFLAWIQPRPIQLRFIELMETGEGSDLFRKHHISGQVLRDELIKRGWIHQLRQRSDGPAQVFCHPDYAGEIGLIMPYEKDFCATCNRLRVSSVGKLHLCLFGDGGVSLRDLLQDDAQQYALEERISDALREKKQTHFLHQSNTGITQNLSYIGG.

The region spanning 8 to 234 is the Radical SAM core domain; sequence AFARKFYYLR…QLRQRSDGPA (227 aa). R17 is a GTP binding site. [4Fe-4S] cluster is bound by residues C24 and C28. Y30 contacts S-adenosyl-L-methionine. C31 provides a ligand contact to [4Fe-4S] cluster. R68 lines the GTP pocket. Position 72 (G72) interacts with S-adenosyl-L-methionine. GTP is bound at residue T99. S123 provides a ligand contact to S-adenosyl-L-methionine. K160 contacts GTP. M194 contributes to the S-adenosyl-L-methionine binding site. Residues C257 and C260 each contribute to the [4Fe-4S] cluster site. 262–264 contacts GTP; the sequence is RLR. Residue C274 coordinates [4Fe-4S] cluster.

The protein belongs to the radical SAM superfamily. MoaA family. In terms of assembly, monomer and homodimer. The cofactor is [4Fe-4S] cluster.

The catalysed reaction is GTP + AH2 + S-adenosyl-L-methionine = (8S)-3',8-cyclo-7,8-dihydroguanosine 5'-triphosphate + 5'-deoxyadenosine + L-methionine + A + H(+). The protein operates within cofactor biosynthesis; molybdopterin biosynthesis. Functionally, catalyzes the cyclization of GTP to (8S)-3',8-cyclo-7,8-dihydroguanosine 5'-triphosphate. In Salmonella paratyphi B (strain ATCC BAA-1250 / SPB7), this protein is GTP 3',8-cyclase.